The chain runs to 536 residues: CTP synthase (536 aa).

Residues 1–267 (MTKFIFVTGG…DDIVIKRLEL (267 aa)) are amidoligase domain. Serine 13 is a CTP binding site. Serine 13 provides a ligand contact to UTP. 14-19 (SLGKGI) is a binding site for ATP. Tyrosine 54 contributes to the L-glutamine binding site. Aspartate 71 contributes to the ATP binding site. Residues aspartate 71 and glutamate 141 each contribute to the Mg(2+) site. CTP-binding positions include 148-150 (DIE), 188-193 (KTKPTQ), and lysine 224. Residues 188-193 (KTKPTQ) and lysine 224 each bind UTP. 240–242 (RDA) serves as a coordination point for ATP. One can recognise a Glutamine amidotransferase type-1 domain in the interval 293-535 (TIGLVGKYVS…IEASLNHQQS (243 aa)). An L-glutamine-binding site is contributed by glycine 355. Catalysis depends on cysteine 382, which acts as the Nucleophile; for glutamine hydrolysis. L-glutamine-binding positions include 383–386 (LGMQ), glutamate 406, and arginine 463. Residues histidine 508 and glutamate 510 contribute to the active site.

The protein belongs to the CTP synthase family. In terms of assembly, homotetramer.

It catalyses the reaction UTP + L-glutamine + ATP + H2O = CTP + L-glutamate + ADP + phosphate + 2 H(+). The catalysed reaction is L-glutamine + H2O = L-glutamate + NH4(+). It carries out the reaction UTP + NH4(+) + ATP = CTP + ADP + phosphate + 2 H(+). The protein operates within pyrimidine metabolism; CTP biosynthesis via de novo pathway; CTP from UDP: step 2/2. With respect to regulation, allosterically activated by GTP, when glutamine is the substrate; GTP has no effect on the reaction when ammonia is the substrate. The allosteric effector GTP functions by stabilizing the protein conformation that binds the tetrahedral intermediate(s) formed during glutamine hydrolysis. Inhibited by the product CTP, via allosteric rather than competitive inhibition. Functionally, catalyzes the ATP-dependent amination of UTP to CTP with either L-glutamine or ammonia as the source of nitrogen. Regulates intracellular CTP levels through interactions with the four ribonucleotide triphosphates. In Staphylococcus saprophyticus subsp. saprophyticus (strain ATCC 15305 / DSM 20229 / NCIMB 8711 / NCTC 7292 / S-41), this protein is CTP synthase.